Here is a 215-residue protein sequence, read N- to C-terminus: Urease accessory protein UreG (215 aa).

24–31 (GPVGSGKT) contacts GTP.

The protein belongs to the SIMIBI class G3E GTPase family. UreG subfamily. Homodimer. UreD, UreF and UreG form a complex that acts as a GTP-hydrolysis-dependent molecular chaperone, activating the urease apoprotein by helping to assemble the nickel containing metallocenter of UreC. The UreE protein probably delivers the nickel.

The protein resides in the cytoplasm. In terms of biological role, facilitates the functional incorporation of the urease nickel metallocenter. This process requires GTP hydrolysis, probably effectuated by UreG. The sequence is that of Urease accessory protein UreG from Burkholderia ambifaria (strain ATCC BAA-244 / DSM 16087 / CCUG 44356 / LMG 19182 / AMMD) (Burkholderia cepacia (strain AMMD)).